Reading from the N-terminus, the 827-residue chain is SH3-containing GRB2-like protein 3-interacting protein 1 (827 aa).

Disordered stretches follow at residues Met-1–Lys-116, Ile-143–Pro-199, and Ile-223–Thr-278. Basic and acidic residues-rich tracts occupy residues Arg-16–Gly-32 and Leu-40–Gly-53. 8 positions are modified to phosphoserine: Ser-78, Ser-104, Ser-105, Ser-107, Ser-149, Ser-151, Ser-156, and Ser-169. A phosphothreonine mark is found at Thr-180 and Thr-182. Ser-236 carries the post-translational modification Phosphoserine. Residues Thr-245 to Pro-260 show a composition bias toward pro residues. Thr-247 and Thr-259 each carry phosphothreonine. Phosphoserine occurs at positions 265, 287, 289, 300, 316, and 319. Residues Ser-265–Ala-276 are compositionally biased toward polar residues. Residues Phe-315 to Thr-505 are disordered. Residues Ser-319–Val-333 show a composition bias toward basic and acidic residues. Thr-324, Thr-328, and Thr-335 each carry phosphothreonine. Residues Thr-335–Asp-345 show a composition bias toward low complexity. Residues Ser-346 to Val-369 are compositionally biased toward pro residues. The residue at position 371 (Ser-371) is a Phosphoserine. The span at Glu-377–Tyr-392 shows a compositional bias: basic and acidic residues. Phosphoserine is present on Ser-398. Thr-409 bears the Phosphothreonine mark. Residues Ala-436–Ser-455 are compositionally biased toward low complexity. Pro residues predominate over residues Thr-456–Lys-474. The span at Ser-481 to Ser-491 shows a compositional bias: low complexity. At Ser-485 the chain carries Phosphoserine. The region spanning Thr-558–Asp-826 is the MHD domain. Interaction with DPF motifs-containing proteins regions lie at residues Pro-560–Thr-566, Ser-592–Pro-594, Thr-666–Asn-669, and Ser-812–Arg-817. Positions Met-648 to Asn-827 are necessary and sufficient to mediate interaction with CANX.

In terms of assembly, interacts with proteins essential or regulating the formation of functional clathrin-coated pits. Interacts with CANX. Interacts with AP2A1. Interacts with EPS15. Interacts with SH3GL3. Interacts with AMPH. Interacts with ITSN1 (via SH3 domains). Interacts with and REPS1. Specifically expressed in brain. Also detected at lower levels in spleen and adipose tissue.

It is found in the membrane. The protein localises to the clathrin-coated pit. May function in clathrin-mediated endocytosis. Has both a membrane binding/tubulating activity and the ability to recruit proteins essential to the formation of functional clathrin-coated pits. Has a preference for membranes enriched in phosphatidylserine and phosphoinositides and is required for the endocytosis of the transferrin receptor. May also bind tubulin. May play a role in the regulation of energy homeostasis. This Psammomys obesus (Fat sand rat) protein is SH3-containing GRB2-like protein 3-interacting protein 1 (SGIP1).